The following is a 77-amino-acid chain: U8-lycotoxin-Ls1o (77 aa).

The signal sequence occupies residues 1–20 (MKLMIFTGLVLFAIVSLIEA). The propeptide occupies 21–26 (QAENGK).

Belongs to the neurotoxin 19 (CSTX) family. 08 (U8-Lctx) subfamily. In terms of processing, contains 4 disulfide bonds. In terms of tissue distribution, expressed by the venom gland.

It localises to the secreted. The sequence is that of U8-lycotoxin-Ls1o from Lycosa singoriensis (Wolf spider).